Reading from the N-terminus, the 290-residue chain is Inner membrane protein YebZ (290 aa).

The Periplasmic portion of the chain corresponds to 1-10 (MLAFTWIALR). Residues 11–31 (FIHFTSLMLVFGFAMYGAWLA) form a helical membrane-spanning segment. Residues 32–49 (PLTIRRLLAKRFLRLQQH) lie on the Cytoplasmic side of the membrane. A helical transmembrane segment spans residues 50 to 70 (AAVWSLISATAMLAVQGGLMG). Over 71-89 (TGWTDVFSPNIWQAVLQTQ) the chain is Periplasmic. The helical transmembrane segment at 90–110 (FGGIWLWQIVLALVTLIVALM) threads the bilayer. Residues 111-117 (QPRNMPR) are Cytoplasmic-facing. Residues 118-138 (LLFMLTTAQFILLAGVGHATL) traverse the membrane as a helical segment. The Periplasmic portion of the chain corresponds to 139–151 (NEGVTAKIHQTNH). The chain crosses the membrane as a helical span at residues 152 to 172 (AIHLICAAAWFGGLLPVLWCM). The Cytoplasmic segment spans residues 173–195 (QLIKGRWRHQAIQALMRFSWCGH). The helical transmembrane segment at 196-216 (FAVIGVLASGVLNALLITGFP) threads the bilayer. Residues 217–222 (PTLTTY) are Periplasmic-facing. A helical membrane pass occupies residues 223–243 (WGQLLLLKAILVMIMVVIALA). At 244-260 (NRYVLVPRMRQDEDRAA) the chain is on the cytoplasmic side. Residues 261 to 281 (PWFVWMTKLEWAIGAVVLVII) traverse the membrane as a helical segment. The Periplasmic portion of the chain corresponds to 282–290 (SLLATLEPF).

It belongs to the CopD family.

It localises to the cell inner membrane. This is Inner membrane protein YebZ (yebZ) from Escherichia coli (strain K12).